A 240-amino-acid polypeptide reads, in one-letter code: MSRLLPLLRSRTARSLRPGPAAAAAPRPPSWCCCGRGLLALAPPGGLPGGPRRLGTHPKKEPMEALNTAQGARDFIYSLHSTERSCLLKELHRFESIAIAQEKLEAPPPTPGQLRYVFIHNAIPFIGFGFLDNAIMIVAGTHIEMSIGIILGISTMAAAALGNLVSDLAGLGLAGYVEALASRLGLSIPDLTPKQVDMWQTRLSTHLGKAVGVTIGCILGMFPLIFFGGGEEDEKLETKS.

A mitochondrion-targeting transit peptide spans 1–61 (MSRLLPLLRS…RRLGTHPKKE (61 aa)). Topologically, residues 62–110 (PMEALNTAQGARDFIYSLHSTERSCLLKELHRFESIAIAQEKLEAPPPT) are cytoplasmic. The helical transmembrane segment at 111-131 (PGQLRYVFIHNAIPFIGFGFL) threads the bilayer. The Extracellular segment spans residues 132-142 (DNAIMIVAGTH). Residues 143 to 165 (IEMSIGIILGISTMAAAALGNLV) form a helical membrane-spanning segment. Over 166 to 209 (SDLAGLGLAGYVEALASRLGLSIPDLTPKQVDMWQTRLSTHLGK) the chain is Cytoplasmic. A helical transmembrane segment spans residues 210–230 (AVGVTIGCILGMFPLIFFGGG). The Extracellular portion of the chain corresponds to 231–240 (EEDEKLETKS).

As to quaternary structure, monomer. Homodimer. Interacts with GJA1. Interacts weakly with DSP. Interacts with SCN1B. As to expression, predominantly expressed the ventricular tissue (at protein level).

It localises to the cell membrane. Its subcellular location is the mitochondrion inner membrane. Essential for maintaining proper cardiac intercalated disk (ICD) structure and function as well as cardiac conduction velocity in the heart. Its association with SCN1B is required for stabilizing the perinexus in the ICD and for localization of GJA1 and SCN5A to the ICD. May regulate the function of the gap junction protein GJA1 and may contribute to the stability and proper localization of GJA1 to cardiac intercalated disk thereby regulating gap junction communication. May also play a role in the regulation of mitochondrial respiration and mitochondrial DNA copy number maintenance. This Homo sapiens (Human) protein is Transmembrane protein 65 (TMEM65).